The sequence spans 327 residues: Annexin A8 (327 aa).

4 Annexin repeats span residues 21–92, 93–164, 177–249, and 253–324; these read FNPD…ALMY, PPYR…CLLQ, GLAL…TVVK, and NLHS…SLVG. Residues Met266, Gly268, Gly270, and Asp310 each contribute to the Ca(2+) site.

The protein belongs to the annexin family.

This protein is an anticoagulant protein that acts as an indirect inhibitor of the thromboplastin-specific complex, which is involved in the blood coagulation cascade. The polypeptide is Annexin A8 (Homo sapiens (Human)).